A 1677-amino-acid chain; its full sequence is ELMO domain-containing protein E (1677 aa).

Disordered regions lie at residues Thr-112–Ser-139, Asn-168–Lys-194, Gln-264–Glu-372, Asp-592–Ser-625, Pro-775–Asn-801, Ile-888–Ile-947, Lys-982–Glu-1002, Ser-1047–Ser-1075, Lys-1122–Ser-1141, Asn-1197–Ala-1248, Asp-1261–Arg-1404, Ser-1434–Glu-1454, Lys-1467–Ser-1593, and Glu-1654–Lys-1677. 2 stretches are compositionally biased toward low complexity: residues Ser-115–Ser-139 and Thr-172–Lys-194. Residues Ser-269–Gly-278 are compositionally biased toward gly residues. Low complexity-rich tracts occupy residues Ser-307–Asn-334, Thr-341–Ser-352, and Asn-597–Asn-616. Residues Ser-492 to Cys-710 enclose the ELMO domain. Residues Asn-891 to Val-903 show a composition bias toward gly residues. The span at Ile-922–Glu-933 shows a compositional bias: acidic residues. Composition is skewed to low complexity over residues Val-934–Asp-946 and Ser-985–Pro-996. The stretch at Leu-1186–Ile-1212 forms a coiled coil. The span at Glu-1228–Glu-1238 shows a compositional bias: acidic residues. Residues Asn-1285–Thr-1305 show a composition bias toward low complexity. A compositionally biased stretch (polar residues) spans Gly-1306–Ser-1334. A compositionally biased stretch (acidic residues) spans Asp-1387 to Lys-1397. Polar residues predominate over residues Pro-1445–Glu-1454. Composition is skewed to low complexity over residues Leu-1475–Ser-1488, Ser-1503–Ser-1574, and Ala-1663–Lys-1677.

The sequence is that of ELMO domain-containing protein E (elmoE) from Dictyostelium discoideum (Social amoeba).